The sequence spans 207 residues: DNA-directed RNA polymerase subunit alpha (207 aa).

Belongs to the RNA polymerase alpha chain family. As to quaternary structure, in plastids the minimal PEP RNA polymerase catalytic core is composed of four subunits: alpha, beta, beta', and beta''. When a (nuclear-encoded) sigma factor is associated with the core the holoenzyme is formed, which can initiate transcription.

Its subcellular location is the plastid. It is found in the chloroplast. The enzyme catalyses RNA(n) + a ribonucleoside 5'-triphosphate = RNA(n+1) + diphosphate. Functionally, DNA-dependent RNA polymerase catalyzes the transcription of DNA into RNA using the four ribonucleoside triphosphates as substrates. This chain is DNA-directed RNA polymerase subunit alpha (rpoA), found in Euglena anabaena (Euglenaria anabaena).